Consider the following 92-residue polypeptide: Small ribosomal subunit protein uS19 (92 aa).

The protein belongs to the universal ribosomal protein uS19 family.

Protein S19 forms a complex with S13 that binds strongly to the 16S ribosomal RNA. This chain is Small ribosomal subunit protein uS19, found in Vibrio parahaemolyticus serotype O3:K6 (strain RIMD 2210633).